We begin with the raw amino-acid sequence, 259 residues long: Acyl-[acyl-carrier-protein]--UDP-N-acetylglucosamine O-acyltransferase (259 aa).

The protein belongs to the transferase hexapeptide repeat family. LpxA subfamily. Homotrimer.

The protein localises to the cytoplasm. The catalysed reaction is a (3R)-hydroxyacyl-[ACP] + UDP-N-acetyl-alpha-D-glucosamine = a UDP-3-O-[(3R)-3-hydroxyacyl]-N-acetyl-alpha-D-glucosamine + holo-[ACP]. Its pathway is glycolipid biosynthesis; lipid IV(A) biosynthesis; lipid IV(A) from (3R)-3-hydroxytetradecanoyl-[acyl-carrier-protein] and UDP-N-acetyl-alpha-D-glucosamine: step 1/6. Involved in the biosynthesis of lipid A, a phosphorylated glycolipid that anchors the lipopolysaccharide to the outer membrane of the cell. In Psychrobacter arcticus (strain DSM 17307 / VKM B-2377 / 273-4), this protein is Acyl-[acyl-carrier-protein]--UDP-N-acetylglucosamine O-acyltransferase.